Consider the following 467-residue polypeptide: MLTPVVSYSTVREVKGPLIVIEKTRGVSYGEIGEVIGPDGEPRKVQVIEVGTDYAIAQVLGGTLGLPAKGSTVRFYGKTLKMPVSEELIGRILDGKGQPRDHMPLPPPEDFRDVNGEPLNPYSREYPEEPIETGISAIDGLYTLVRGQKLPIFSGTGLPHNMMAAQVVRQSTVRGSEEEFAVVFVGVGIKTEEALFFMDEFRRTGALRRAVAVLNLASDPVAERILAPRVGLTIAEYLAWQLGYHVLVVITDMTNYCEGLRELSSGRGELPGRRGYPGYMYTDLATIYERAGKAHGKKGSITQFPILTMPHDDITHPIPDLTGYITEGQLVLSRAMWGKGIYPPFDVIMSLSRLAKDAIGEGKTREDHKDVANTLISAYSKALEIRNLATLVGERNLGWRERRYLRFADAFEQKFIKQGYYERRSFEETLDIGWDVLSILPEDELTNARPQITQKFYRRHIFESVKL.

Positions Gly-95–Val-114 are disordered.

Belongs to the ATPase alpha/beta chains family. As to quaternary structure, has multiple subunits with at least A(3), B(3), C, D, E, F, H, I and proteolipid K(x).

It localises to the cell membrane. Component of the A-type ATP synthase that produces ATP from ADP in the presence of a proton gradient across the membrane. The B chain is a regulatory subunit. The polypeptide is A-type ATP synthase subunit B (Pyrobaculum islandicum (strain DSM 4184 / JCM 9189 / GEO3)).